The chain runs to 302 residues: Sushi domain-containing protein 6 (302 aa).

An N-terminal signal peptide occupies residues 1–39 (MCHGKIAPKSSSEFVVTSVGHGVFLQLVILCALLGDGLA). In terms of domain architecture, Sushi spans 40 to 104 (SVCPLPPEPE…TPAMEVSCHL (65 aa)). Intrachain disulfides connect Cys-42–Cys-89 and Cys-74–Cys-102. The chain crosses the membrane as a helical span at residues 120–140 (IVASTASSVALILLLVVLFVL). Disordered stretches follow at residues 202–241 (GSAP…CEAW) and 256–302 (TSSW…LKEA). 3 stretches are compositionally biased toward polar residues: residues 212–222 (REQQLQGQEAC), 256–267 (TSSWVAGSGSSR), and 279–290 (SDIQSLLSLTSE).

It localises to the membrane. In terms of biological role, may play a role in growth-suppressive activity and cell death. May be involved in the production of chemokine molecules in umbilical vein endothelial cells (HUVECs) cultured in THP1 monocyte LPS-induced medium. Plays a role in preventing tumor onset. This is Sushi domain-containing protein 6 from Mus musculus (Mouse).